We begin with the raw amino-acid sequence, 197 residues long: Imidazoleglycerol-phosphate dehydratase (197 aa).

It belongs to the imidazoleglycerol-phosphate dehydratase family.

The protein resides in the cytoplasm. The enzyme catalyses D-erythro-1-(imidazol-4-yl)glycerol 3-phosphate = 3-(imidazol-4-yl)-2-oxopropyl phosphate + H2O. The protein operates within amino-acid biosynthesis; L-histidine biosynthesis; L-histidine from 5-phospho-alpha-D-ribose 1-diphosphate: step 6/9. This Rhodopseudomonas palustris (strain ATCC BAA-98 / CGA009) protein is Imidazoleglycerol-phosphate dehydratase.